The chain runs to 838 residues: MFDITRKCVEWGDRSLTIESGKIARQAGGAVVVDYGGTSVLATVVSQKSKEAVDFLPLTVQFLAKSYAVGKIPGGFFKREGKPSDRETLISRIIDRSIRPLFPSGFSDEVAVVCNLLSYDASSPPETVALIGASAALAISGIPFHCPVAGARIGYIRGEGRYILNPSADELSVSALDMFYARTDTSILMVESEAHELTEAEMLGALQFGHEHCEEIIKVIGEFAEEARKCAPAEFVPCDLSTIIDSIGSDYKERFLVAYSEKEKKARVAKLDAVRASLTEDLRVKFLSESEGGSKYIAQDIVYAMKTFERSLVRERVLESKSRIDGRAYDQIRNIEIEVDLISKAHGSALFTRGDTQALVITALGTPQDEQIVDGFDGDKRERFLLHYNFPPYAVGEASALRPPGRREIGHGKLAWRAIHPVLPSKADFPYTIRVVSEITESDGSSSMATVCGASLALMDTGVPLKSSVAGIAMGLIKEGDRYAILSDILGDEDYLGDMDFKVAGTREGITALQMDMKVKGIDFAVLGTALDQAKEGRFFIIEKMDRVIKESRGAVREHVPRMESMLIDKGKIKNVIGAGGKNVREICEKTGAKIEISQDGTVMIYAVGREAIESAKDMITGIVSEPEVGKIYSGEVCELAKYGAFVTFLGARKGLVHISEIRNEHINAVADVLAVGDKVKVLVIDMDKDHIQLSMRRIDQETGDQVDCELYAPQRRNGVAAGNTVGDSSVNGGGAGSVYVPRGDYGGASAGRNGRGGGKRDGAAKSSSSAGNGGGRSSSSTRRRHSAGSSGYSSDSSSGNTKSSSSESSGGTGGRGRNGANGDVQNGPAAPKKPRFF.

The Mg(2+) site is built by aspartate 494 and aspartate 500. The region spanning 561-620 is the KH domain; sequence PRMESMLIDKGKIKNVIGAGGKNVREICEKTGAKIEISQDGTVMIYAVGREAIESAKDMI. An S1 motif domain is found at 630-697; that stretch reads GKIYSGEVCE…DKDHIQLSMR (68 aa). Residues 747 to 757 are compositionally biased toward gly residues; the sequence is GGASAGRNGRG. Residues 747-838 are disordered; sequence GGASAGRNGR…PAAPKKPRFF (92 aa). Positions 788–810 are enriched in low complexity; the sequence is AGSSGYSSDSSSGNTKSSSSESS. Gly residues predominate over residues 811-820; sequence GGTGGRGRNG.

Belongs to the polyribonucleotide nucleotidyltransferase family. The cofactor is Mg(2+).

The protein localises to the cytoplasm. It catalyses the reaction RNA(n+1) + phosphate = RNA(n) + a ribonucleoside 5'-diphosphate. Involved in mRNA degradation. Catalyzes the phosphorolysis of single-stranded polyribonucleotides processively in the 3'- to 5'-direction. The protein is Polyribonucleotide nucleotidyltransferase of Anaplasma phagocytophilum (strain HZ).